Consider the following 247-residue polypeptide: Pulmonary surfactant-associated protein A (247 aa).

Positions 1 to 19 (MWCSLALILILVTVSGIMC) are cleaved as a signal peptide. A glycan (N-linked (GlcNAc...) asparagine) is linked at Asn20. The region spanning 27 to 99 (GSPGIPGTPG…PGERGPPGLP (73 aa)) is the Collagen-like domain. 4-hydroxyproline occurs at positions 29, 32, 35, 41, 53, 56, 62, 66, and 69. Positions 32 to 101 (PGTPGSHGLP…ERGPPGLPAS (70 aa)) are disordered. Basic and acidic residues predominate over residues 41 to 50 (PGRDGRDGVK). Residues 53-64 (PGPPGPMGPPGV) show a composition bias toward pro residues. Basic and acidic residues predominate over residues 83-92 (ERGDKGDPGE). The C-type lectin domain maps to 131-247 (LAVGDKVFAT…LQSRLTICEF (117 aa)). 2 disulfide bridges follow: Cys154/Cys245 and Cys223/Cys237. Residue Asn206 is glycosylated (N-linked (GlcNAc...) asparagine). Glu214, Arg216, Asn233, and Asp234 together coordinate Ca(2+).

This sequence belongs to the SFTPA family. Oligomeric complex of 6 set of homotrimers.

The protein localises to the secreted. It localises to the extracellular space. It is found in the extracellular matrix. Its subcellular location is the surface film. In terms of biological role, in presence of calcium ions, it binds to surfactant phospholipids and contributes to lower the surface tension at the air-liquid interface in the alveoli of the mammalian lung and is essential for normal respiration. Enhances the expression of MYO18A/SP-R210 on alveolar macrophages. The chain is Pulmonary surfactant-associated protein A (SFTPA1) from Cavia porcellus (Guinea pig).